A 118-amino-acid polypeptide reads, in one-letter code: Ribulose bisphosphate carboxylase small subunit (118 aa).

It belongs to the RuBisCO small chain family. As to quaternary structure, heterohexadecamer of 8 large and 8 small subunits.

Its function is as follows. RuBisCO catalyzes two reactions: the carboxylation of D-ribulose 1,5-bisphosphate, the primary event in carbon dioxide fixation, as well as the oxidative fragmentation of the pentose substrate. Both reactions occur simultaneously and in competition at the same active site. Although the small subunit is not catalytic it is essential for maximal activity. The chain is Ribulose bisphosphate carboxylase small subunit from Rhodobacter capsulatus (Rhodopseudomonas capsulata).